The sequence spans 73 residues: Conotoxin reg3a (73 aa).

Positions 1-20 are cleaved as a signal peptide; the sequence is MMSKLRVLLTICLLLFPLSA. A propeptide spanning residues 21 to 55 is cleaved from the precursor; sequence LPLDGDQPADQPAKRMWNGKLAARKPRFDKYDLVR. 4-hydroxyproline occurs at positions 59, 60, 65, and 70. At Cys-72 the chain carries Cysteine amide.

In terms of processing, contains 3 disulfide bonds. In terms of tissue distribution, expressed by the venom duct.

Its subcellular location is the secreted. The sequence is that of Conotoxin reg3a from Conus regius (Crown cone).